A 506-amino-acid polypeptide reads, in one-letter code: Cytochrome P450 monooxygenase tpcB (506 aa).

A heme-binding site is contributed by cysteine 450.

It belongs to the cytochrome P450 family. The cofactor is heme.

It functions in the pathway secondary metabolite biosynthesis; terpenoid biosynthesis. Its function is as follows. Cytochrome P450 monooxygenase; part of the gene cluster that mediates the biosynthesis of terpestacin. The bifunctional terpene synthase tpcA converts isopentenyl diphosphate (IPP) and dimethylallyl diphosphate (DMAPP) into the sesterterpene preterpestacin I. The C-terminal prenyltransferase (PT) domain of tpcA catalyzes formation of GFPP, whereas the N-terminal terpene cyclase (TC) domain catalyzes the cyclization of GFPP into preterpestacin I. The cytochrome P450 monooxygenase tpcB then hydroxylates preterpestacin I to yield 24-hydroxypreterpstacin I (renamed as preterpestacin II) whereas the cytochrome P450 monooxygenase tpcC further hydroxylates preterpestacin II to yield 16,17-dihydroxypreterpestacin II (renamed as preterpestacin III). Finally, the FAD-dependent monooxygenase tpcD converts preterpestacin III into terpestacin. In Cochliobolus heterostrophus (strain C5 / ATCC 48332 / race O) (Southern corn leaf blight fungus), this protein is Cytochrome P450 monooxygenase tpcB.